Reading from the N-terminus, the 438-residue chain is Transposon Ty2-LR2 Gag polyprotein (438 aa).

Composition is skewed to polar residues over residues 1 to 11 (MESQQLHQNPH), 19 to 39 (ASVT…SASN), and 49 to 60 (KVNSQEETTPGT). Disordered regions lie at residues 1–88 (MESQ…YQQH), 364–397 (KNVS…AKAH), and 418–438 (VSSQ…TERI). The segment at 295–397 (ENNINVSDRL…SSKPRAAKAH (103 aa)) is RNA-binding. Residues 369-381 (TSPNTTNTKVTTR) show a composition bias toward low complexity.

In terms of assembly, homotrimer.

The protein resides in the cytoplasm. Its function is as follows. Capsid protein (CA) is the structural component of the virus-like particle (VLP), forming the shell that encapsulates the retrotransposons dimeric RNA genome. The particles are assembled from trimer-clustered units and there are holes in the capsid shells that allow for the diffusion of macromolecules. CA also has nucleocapsid-like chaperone activity, promoting primer tRNA(i)-Met annealing to the multipartite primer-binding site (PBS), dimerization of Ty2 RNA and initiation of reverse transcription. The polypeptide is Transposon Ty2-LR2 Gag polyprotein (TY2A-LR2) (Saccharomyces cerevisiae (strain ATCC 204508 / S288c) (Baker's yeast)).